A 490-amino-acid chain; its full sequence is tRNA-guanine(15) transglycosylase (490 aa).

Asp-90 serves as the catalytic Nucleophile. Positions 125 and 193 each coordinate substrate. 3 residues coordinate Zn(2+): Cys-276, Cys-278, and Cys-281.

It belongs to the archaeosine tRNA-ribosyltransferase family. The cofactor is Zn(2+).

It catalyses the reaction guanosine(15) in tRNA + 7-cyano-7-deazaguanine = 7-cyano-7-carbaguanosine(15) in tRNA + guanine. It participates in tRNA modification; archaeosine-tRNA biosynthesis. Functionally, exchanges the guanine residue with 7-cyano-7-deazaguanine (preQ0) at position 15 in the dihydrouridine loop (D-loop) of archaeal tRNAs. The sequence is that of tRNA-guanine(15) transglycosylase from Methanosarcina acetivorans (strain ATCC 35395 / DSM 2834 / JCM 12185 / C2A).